The chain runs to 99 residues: DNA/RNA-binding protein Alba 1 (99 aa).

Lys-17 carries the post-translational modification N6-acetyllysine.

The protein belongs to the histone-like Alba family. Post-translationally, acetylated. Acetylation at Lys-17 decreases DNA-binding affinity.

Its subcellular location is the cytoplasm. It localises to the chromosome. Its function is as follows. Binds double-stranded DNA tightly but without sequence specificity. Involved in DNA compaction. The chain is DNA/RNA-binding protein Alba 1 from Sulfurisphaera tokodaii (strain DSM 16993 / JCM 10545 / NBRC 100140 / 7) (Sulfolobus tokodaii).